The chain runs to 492 residues: MAALGSLPTLPEGLTYDDVLLIPQRSPVRSRKAVNTSTRLSRNIHLKIPIVASNMDTVCEDKTAVTMAREGGIGILHRFCSIEEQCAMVRKVKRAQSFLIEDPRMILPSATKAEALEELNWSGRKGGVSCLMVVDDLTSRRLCGVLTKSDLTFATGSALVETLMTPVSRMVVSTNTAITLEEAREVMRTKRTKNIPLLGPKGELLYLITRSDILKLTGNLNATLDSRGRLIVGAAIGVKKEDHERAAALVDAGADVLVVDIAHGHSDLCIDMVKALKVNPLTNKVDIIAGNIATAEAAQDLIDAGADGLKIGVGPGSICITRLVAGSGVPQLSSVMDCARVAKKHGVPCIADGGIKTAGDICKAIAAGADTVMLGNMLAGTDEAPGRVLVKDGKKVKIIRGMAGFGANISKAEREQRLDEDVFHDLVPEGVEGSVPCKGPLAPILKQLVGGLRSGISYCGSHSIADMQQRARFVRMSGAGLRESGSHDISKL.

Residues 30-31 and R78 contribute to the NADP(+) site; that span reads SR. CBS domains are found at residues 99-162 and 164-223; these read LIED…LVET and MTPV…LNAT. NADP(+)-binding positions include 260 to 262 and 313 to 314; these read DIA and VG. The K(+) site is built by G314, G316, and C319. The active-site Thioimidate intermediate is C319. The active-site Proton donor/acceptor is the T321. R322 lines the K(+) pocket. Residues 352–354, 375–376, and 401–403 each bind GMP; these read DGG, GN, and GMA. NADP(+) is bound by residues M402 and 454–457; that span reads SGIS. A Microbody targeting signal motif is present at residues 490–492; sequence SKL.

This sequence belongs to the IMPDH/GMPR family. GuaC type 1 subfamily. Homotetramer.

The protein localises to the glycosome. It catalyses the reaction IMP + NH4(+) + NADP(+) = GMP + NADPH + 2 H(+). Activated by GTP and inhibited by ATP and IMP. Mycophenolic acid (MPA) is a competitive inhibitor of the enzyme with respect to NADPH. Its function is as follows. Catalyzes the irreversible NADPH-dependent deamination of GMP to IMP. It functions in the conversion of nucleobase, nucleoside and nucleotide derivatives of G to A nucleotides, and in maintaining the intracellular balance of A and G nucleotides. The chain is GMP reductase from Leishmania major.